Consider the following 714-residue polypeptide: NCK-interacting protein with SH3 domain (714 aa).

The region spanning 1-58 (MYRALYAFRSAEPNAMAFAAGETFLVLERSSTHWWLAARARSGETGYVPPAYLHRLQG) is the SH3 domain. Disordered regions lie at residues 103–126 (TLSR…DHHL) and 139–298 (RTGF…AAET). Residues 106-121 (RRGTSASSATVMTPST) are compositionally biased toward polar residues. A Phosphoserine modification is found at Ser120. The Nuclear localization signal motif lies at 168–185 (RRAAPTTPPPPVKRRDRE). Position 174 is a phosphothreonine (Thr174). Low complexity predominate over residues 200 to 215 (SGGSSVSSGSSASSTS). Polar residues predominate over residues 216-226 (MDTLYTGSSPS). Over residues 252–263 (QPSPSKAPSPEP) the composition is skewed to pro residues. Phosphoserine is present on residues Ser260, Ser286, and Ser673.

As to quaternary structure, associates with the intermediate filaments, vimentin and desmin. Binds the first and third SH3 domains of NCK. Binds the proline-rich domains of N-WASP through its SH3 domain. Similarly, binds diaphanous protein homolog 1 (DRF1). Binds the SH3 domains of GRB2 through its proline-rich domains. Interacts with FASLG.

It is found in the nucleus. Functionally, has an important role in stress fiber formation induced by active diaphanous protein homolog 1 (DRF1). Induces microspike formation, in vivo. In vitro, stimulates N-WASP-induced ARP2/3 complex activation in the absence of CDC42. May play an important role in the maintenance of sarcomere and/or in the assembly of myofibrils into sarcomeres. Implicated in regulation of actin polymerization and cell adhesion. The polypeptide is NCK-interacting protein with SH3 domain (Nckipsd) (Mus musculus (Mouse)).